The sequence spans 158 residues: QDAPTGDAAAGAKVFNKCQTCHMVVAPDGTVLAGKAGKTGNPLYGLDGRAPASYPDFAYGDGIKELGAAGEVWNEADFLQYVADPTKFLKTKTGDTKAKGKMTFKLPNEKEAHDVWAFLNSLAPAPAAAEAAPAADAAAPAAADAAAPAEPAAEGAAT.

Pyrrolidone carboxylic acid is present on glutamine 1. Residues cysteine 18, cysteine 21, histidine 22, and methionine 102 each coordinate heme c. The segment at 129 to 158 (AEAAPAADAAAPAAADAAAPAEPAAEGAAT) is disordered.

The protein belongs to the cytochrome c family. In terms of processing, binds 1 heme c group covalently per subunit.

It localises to the periplasm. Functionally, cytochrome c2 is found mainly in purple, non-sulfur, photosynthetic bacteria where it functions as the electron donor to the oxidized bacteriochlorophyll in the photophosphorylation pathway. However, it may also have a role in the respiratory chain and is found in some non-photosynthetic bacteria. This chain is Cytochrome c2, found in Fuscovulum blasticum (Rhodobacter blasticus).